Reading from the N-terminus, the 478-residue chain is MNHEVHFGRIERRHMRRVKNIFFVGIGGTGMSGIAEVLLNLGYSISGSDIKDSAVTQYLAQKGAQIFIGHAAENVEHADVVVVSSAIAENNVEVKQARALEIPVIRRAQMLAELMRFRFGIAIAGTHGKTTTTSLTASLLSDAGLDPTFVIGGILTAAGSNARLGEGHYLVAESDESDCSFWLLQPMISIVTNIDADHLENYNGSYETLKAGFVRFLHNLPFYGLAVLCIDDAGVRSILPEVGRPVRTYGFSEDADVRAINVRQKGLAMHFDVIAHDEDRCFSVTLNMAGKHNVLNALAAIIVGEELGIDRETIIEGLAQFKGVARRFTHHGRIAHDHGFADVFEDYGHHPREIKAVLDAAMEGFAGRRIVAVFQPHRFTRTRDLLDDFAEVLAVCDCLVLTEVYAAGEEPIAGADARDLTRAIRAHGRVEPIFIADKEEIVPHLRHDILQDDDVVIFFGAGDIGRVAKMMDELKIKE.

125–131 (GTHGKTT) provides a ligand contact to ATP.

It belongs to the MurCDEF family.

Its subcellular location is the cytoplasm. It catalyses the reaction UDP-N-acetyl-alpha-D-muramate + L-alanine + ATP = UDP-N-acetyl-alpha-D-muramoyl-L-alanine + ADP + phosphate + H(+). The protein operates within cell wall biogenesis; peptidoglycan biosynthesis. Cell wall formation. This Dichelobacter nodosus (strain VCS1703A) protein is UDP-N-acetylmuramate--L-alanine ligase.